An 874-amino-acid chain; its full sequence is Alanine--tRNA ligase (874 aa).

Zn(2+) is bound by residues histidine 562, histidine 566, cysteine 665, and histidine 669.

This sequence belongs to the class-II aminoacyl-tRNA synthetase family. The cofactor is Zn(2+).

It localises to the cytoplasm. It catalyses the reaction tRNA(Ala) + L-alanine + ATP = L-alanyl-tRNA(Ala) + AMP + diphosphate. In terms of biological role, catalyzes the attachment of alanine to tRNA(Ala) in a two-step reaction: alanine is first activated by ATP to form Ala-AMP and then transferred to the acceptor end of tRNA(Ala). Also edits incorrectly charged Ser-tRNA(Ala) and Gly-tRNA(Ala) via its editing domain. The polypeptide is Alanine--tRNA ligase (Pseudomonas putida (strain ATCC 47054 / DSM 6125 / CFBP 8728 / NCIMB 11950 / KT2440)).